The chain runs to 405 residues: S-adenosylmethionine synthase (405 aa).

139 to 144 contacts ATP; that stretch reads GKGSAD.

This sequence belongs to the AdoMet synthase 2 family. Mg(2+) is required as a cofactor.

It carries out the reaction L-methionine + ATP + H2O = S-adenosyl-L-methionine + phosphate + diphosphate. It functions in the pathway amino-acid biosynthesis; S-adenosyl-L-methionine biosynthesis; S-adenosyl-L-methionine from L-methionine: step 1/1. Catalyzes the formation of S-adenosylmethionine from methionine and ATP. The chain is S-adenosylmethionine synthase from Sulfurisphaera tokodaii (strain DSM 16993 / JCM 10545 / NBRC 100140 / 7) (Sulfolobus tokodaii).